The chain runs to 434 residues: MEIEKEFHRLDQAASWAAIYQDIRHEASDFPCKVAKHPRNKNRNRYRDVSPFDHSRIKLNQGDNDYINASLIKMEEAQRSYILTQGPLPNTCGHFWEMVWEQKSRGVVMLNRVMEKGSIKCAQYWPRKEEKEMFFEDTNLKLTLISEDIKSYYTVRQLELENLTTQETREILHFHYTTWPDFGVPESPASFLNFLFKVRESGSLNPEYGPVVVHCSAGIGRSGTFCLVDTCLLLMDKRKDPSSVDVKQVLLEMRKYRMGLIQTADQLRFSYLAVIEGAKFIMGDASVQEQWKELSNEDLDPPPEHTPPPPRPPKRTSEMHNGRMHEHAEFFPKHQVVEEEIRCSVSTAEETVSDGRVFSSVPLITDSTSQDTEIRRRTVGENLHVTAHKEESKSESVEEDDENMMTTWKPFLVNICMFTFLTAGAYLCYRVCFH.

The 275-residue stretch at 3-277 (IEKEFHRLDQ…RFSYLAVIEG (275 aa)) folds into the Tyrosine-protein phosphatase domain. Ser-50 bears the Phosphoserine mark. Substrate-binding positions include Asp-181, 215–221 (CSAGIGR), and Gln-262. Catalysis depends on Cys-215, which acts as the Phosphocysteine intermediate. The disordered stretch occupies residues 291–319 (WKELSNEDLDPPPEHTPPPPRPPKRTSEM).

This sequence belongs to the protein-tyrosine phosphatase family. Non-receptor class 1 subfamily. As to quaternary structure, interacts with EPHA3 (phosphorylated); dephosphorylates EPHA3 and may regulate its trafficking and function. Interacts with MET. Interacts with NCK1. In terms of processing, phosphorylated on serine and threonine residues near the N-terminus by casein kinase II (CK2).

The protein resides in the endoplasmic reticulum membrane. It carries out the reaction O-phospho-L-tyrosyl-[protein] + H2O = L-tyrosyl-[protein] + phosphate. In terms of biological role, may play an important role in CKII- and p60c-src-induced signal transduction cascades. May regulate the EFNA5-EPHA3 signaling pathway which modulates cell reorganization and cell-cell repulsion. May also regulate the hepatocyte growth factor receptor signaling pathway through dephosphorylation of MET. This chain is Tyrosine-protein phosphatase non-receptor type 1 (PTPN1), found in Gallus gallus (Chicken).